The primary structure comprises 342 residues: Forkhead box protein D5-C (342 aa).

Residues 1-89 (MNLSQDSSAH…KHSLDTTTNG (89 aa)) form a disordered region. Positions 20-34 (SDDEDEIDILGEDDP) are enriched in acidic residues. The span at 59–70 (SKLSCNESASHS) shows a compositional bias: polar residues. The segment covering 71-83 (SGERERGTSKHSL) has biased composition (basic and acidic residues). Positions 97–191 (KPPYSYIALI…DNGSFLRRRK (95 aa)) form a DNA-binding region, fork-head.

As to expression, at the onset of gastrulation, expressed in the superficial layer of cells in the dorsal blastopore lip (Spemann organizer). In the open neural plate, expressed in a row of cells destined to become the floor plate of the neural tube. After neural tube closure, only detected in the tailtip and a small area located at the midbrain/hindbrain boundary.

It is found in the nucleus. Its function is as follows. Transcriptional repressor. The polypeptide is Forkhead box protein D5-C (foxd5-c) (Xenopus laevis (African clawed frog)).